We begin with the raw amino-acid sequence, 338 residues long: Glutamyl-tRNA reductase (338 aa).

Residues 50–53, serine 102, 107–109, and glutamine 113 contribute to the substrate site; these read TCHR and ETE. Cysteine 51 (nucleophile) is an active-site residue. Residue 181–186 participates in NADP(+) binding; that stretch reads GYSDIN.

Belongs to the glutamyl-tRNA reductase family. As to quaternary structure, homodimer.

It catalyses the reaction (S)-4-amino-5-oxopentanoate + tRNA(Glu) + NADP(+) = L-glutamyl-tRNA(Glu) + NADPH + H(+). It participates in porphyrin-containing compound metabolism; protoporphyrin-IX biosynthesis; 5-aminolevulinate from L-glutamyl-tRNA(Glu): step 1/2. In terms of biological role, catalyzes the NADPH-dependent reduction of glutamyl-tRNA(Glu) to glutamate 1-semialdehyde (GSA). In Chlamydia caviae (strain ATCC VR-813 / DSM 19441 / 03DC25 / GPIC) (Chlamydophila caviae), this protein is Glutamyl-tRNA reductase.